A 259-amino-acid chain; its full sequence is Phosphate import ATP-binding protein PstB 2 (259 aa).

The ABC transporter domain maps to 12-254 (ISARGLNVHY…PKEPLTQGYI (243 aa)). 44–51 (GPSGCGKS) provides a ligand contact to ATP.

Belongs to the ABC transporter superfamily. Phosphate importer (TC 3.A.1.7) family. In terms of assembly, the complex is composed of two ATP-binding proteins (PstB), two transmembrane proteins (PstC and PstA) and a solute-binding protein (PstS).

It is found in the cell inner membrane. It catalyses the reaction phosphate(out) + ATP + H2O = ADP + 2 phosphate(in) + H(+). In terms of biological role, part of the ABC transporter complex PstSACB involved in phosphate import. Responsible for energy coupling to the transport system. The chain is Phosphate import ATP-binding protein PstB 2 from Paramagnetospirillum magneticum (strain ATCC 700264 / AMB-1) (Magnetospirillum magneticum).